Here is a 144-residue protein sequence, read N- to C-terminus: Transcription antitermination protein NusB (144 aa).

Belongs to the NusB family.

Its function is as follows. Involved in transcription antitermination. Required for transcription of ribosomal RNA (rRNA) genes. Binds specifically to the boxA antiterminator sequence of the ribosomal RNA (rrn) operons. The chain is Transcription antitermination protein NusB from Paraburkholderia xenovorans (strain LB400).